Reading from the N-terminus, the 796-residue chain is Cadherin-11 (796 aa).

The signal sequence occupies residues 1–22; that stretch reads MKENYCLQAALVCLGMLCHSHA. Residues 23-53 constitute a propeptide that is removed on maturation; it reads FAPERRGHLRPSFHGHHEKGKEGQVLQRSKR. Cadherin domains lie at 54-159, 160-268, 269-383, 384-486, and 487-612; these read GWVW…PPEF, LHET…PPKF, PQSV…PPMF, LAPS…DNAP, and KFAA…YILN. Residues 54–617 are Extracellular-facing; the sequence is GWVWNQFFVI…AYILNAGLST (564 aa). Residues N455 and N540 are each glycosylated (N-linked (GlcNAc...) asparagine). Residues 618-640 traverse the membrane as a helical segment; sequence GALIAILACIVILLVIVVLFVTL. At 641-796 the chain is on the cytoplasmic side; that stretch reads RRQKKEPLIV…GSKDTFDDDS (156 aa). S788 is subject to Phosphoserine. T791 bears the Phosphothreonine mark.

As to quaternary structure, interacts with PCDH8. In terms of tissue distribution, expressed mainly in brain but also found in other tissues. Expressed in neuroblasts. In the embryo from 67 to 72 days of gestation, detected at high levels in facial mesenchyme including the central palatal mesenchyme, dental mesenchyme, the eye and optic muscle, and the tongue (at protein level).

It localises to the cell membrane. In terms of biological role, cadherins are calcium-dependent cell adhesion proteins. They preferentially interact with themselves in a homophilic manner in connecting cells; cadherins may thus contribute to the sorting of heterogeneous cell types. Required for proper focal adhesion assembly. Involved in the regulation of cell migration. This is Cadherin-11 (CDH11) from Homo sapiens (Human).